The following is a 354-amino-acid chain: Phospho-N-acetylmuramoyl-pentapeptide-transferase (354 aa).

A run of 10 helical transmembrane segments spans residues 16 to 36 (YITVRAGIAFFFAFFLTLYLM), 66 to 86 (TPTMGGVVFIFSALLASLLTV), 88 to 108 (IHNPYVLGGFLTILGFLAIGV), 130 to 150 (FFLQILVAFVVSLFLYEYAHL), 168 to 188 (IFGILFWTLVIVATSNAVNLT), 193 to 213 (GLATVPSIMALTTLAIITYIT), 227 to 247 (IIGVGEVSIIAAAFAGSLIGF), 257 to 277 (VFMGDSGSLTLGAFIGYMAII), 282 to 302 (VLLILIGFVFVMEALSVIIQV), and 331 to 351 (KIIVRFWIIALISNLIALITL).

Belongs to the glycosyltransferase 4 family. MraY subfamily. It depends on Mg(2+) as a cofactor.

It is found in the cell inner membrane. It catalyses the reaction UDP-N-acetyl-alpha-D-muramoyl-L-alanyl-gamma-D-glutamyl-meso-2,6-diaminopimeloyl-D-alanyl-D-alanine + di-trans,octa-cis-undecaprenyl phosphate = di-trans,octa-cis-undecaprenyl diphospho-N-acetyl-alpha-D-muramoyl-L-alanyl-D-glutamyl-meso-2,6-diaminopimeloyl-D-alanyl-D-alanine + UMP. It functions in the pathway cell wall biogenesis; peptidoglycan biosynthesis. In terms of biological role, catalyzes the initial step of the lipid cycle reactions in the biosynthesis of the cell wall peptidoglycan: transfers peptidoglycan precursor phospho-MurNAc-pentapeptide from UDP-MurNAc-pentapeptide onto the lipid carrier undecaprenyl phosphate, yielding undecaprenyl-pyrophosphoryl-MurNAc-pentapeptide, known as lipid I. The sequence is that of Phospho-N-acetylmuramoyl-pentapeptide-transferase from Nitratiruptor sp. (strain SB155-2).